Consider the following 747-residue polypeptide: AT-rich interactive domain-containing protein 4 (747 aa).

The disordered stretch occupies residues 454–475 (PLPTRKRSEPCRESKEIENGGP). A compositionally biased stretch (basic and acidic residues) spans 459-471 (KRSEPCRESKEIE). Residues 566–670 (VCSEEEFLRD…YLLEYEYAHD (105 aa)) enclose the ARID domain. The PHD-type zinc-finger motif lies at 674–730 (GECCLICRSSTAGDWVNCGSCGEWAHFGCDRRPGLGAFKDYAKTDGLEYVCPNCSVS).

Its subcellular location is the nucleus. The chain is AT-rich interactive domain-containing protein 4 (ARID4) from Arabidopsis thaliana (Mouse-ear cress).